We begin with the raw amino-acid sequence, 213 residues long: MDTLWDISPPVSPATPVWPGDTPVAVERVWRMEAGSPVNVARLTLSPHTGAHCDAPLHYDADGAPIGAVPLDTYLGPCRVIHCIGAAPVVRPADVEAALDGVPPRVLLRTYARAAVEQWDSNFCAVAPDTVDLLAAHGVKLIGIDTPSLDPQESKTMDAHRRVRAHRMAILEGIVLDDVPPGDYELIALPLKFATLDASPVRAVLRALPAQAS.

Residue W18 participates in substrate binding. Residues H48, H52, and D54 each contribute to the Zn(2+) site. H58 serves as the catalytic Proton donor/acceptor. The Zn(2+) site is built by H160 and E172.

The protein belongs to the Cyclase 1 superfamily. KynB family. Homodimer. Requires Zn(2+) as cofactor.

The catalysed reaction is N-formyl-L-kynurenine + H2O = L-kynurenine + formate + H(+). The protein operates within amino-acid degradation; L-tryptophan degradation via kynurenine pathway; L-kynurenine from L-tryptophan: step 2/2. Catalyzes the hydrolysis of N-formyl-L-kynurenine to L-kynurenine, the second step in the kynurenine pathway of tryptophan degradation. The polypeptide is Kynurenine formamidase (Burkholderia cenocepacia (strain ATCC BAA-245 / DSM 16553 / LMG 16656 / NCTC 13227 / J2315 / CF5610) (Burkholderia cepacia (strain J2315))).